The primary structure comprises 314 residues: Thioredoxin reductase aclD (314 aa).

Residues 13-16, 35-40, histidine 47, and alanine 112 contribute to the FAD site; these read GGPA and DSKSYR. An intrachain disulfide couples cysteine 136 to cysteine 139. FAD contacts are provided by residues aspartate 281 and 288-289; that span reads AA.

Belongs to the class-II pyridine nucleotide-disulfide oxidoreductase family. Homodimer. Requires FAD as cofactor.

It functions in the pathway mycotoxin biosynthesis. Its function is as follows. Thioredoxin reductase; part of the gene cluster that mediates the biosynthesis of aspirochlorine (or antibiotic A30641), an unusual halogenated spiro compound with distinctive antifungal properties due to selective inhibition of protein biosynthesis, and which is also active against bacteria, viruses, and murine tumor cells. The non-ribosomal peptide synthetase (NRPS) aclP is responsible the formation of the diketopiperazine (DKP) core from the condensation of 2 phenylalanine residues. One Phe residue is tailored into chlorotyrosine by hydroxylation and chlorination, whereas the second Phe undergoes an unprecedented C-C bond cleavage to be converted into glycine. After formation of the DKP, sulfur is incorporated into the DKP by conjugation with glutathione by aclG, followed by its stepwise degradation to the thiol by aclI, aclJ and aclK, and the dithiol oxidation by aclT. In addition, oxygenases (aclB, aclC, aclL and aclO) and O-methyltransferases (aclM and aclU) act as tailoring enzymes to produce the intermediate dechloroaspirochlorine. Ultimately, chlorination of dechloroaspirochlorine by the halogenase aclH is the last step in the aspirochlorine pathway. This Aspergillus oryzae (strain ATCC 42149 / RIB 40) (Yellow koji mold) protein is Thioredoxin reductase aclD.